The primary structure comprises 299 residues: ATP phosphoribosyltransferase (299 aa).

This sequence belongs to the ATP phosphoribosyltransferase family. Long subfamily. Mg(2+) serves as cofactor.

It localises to the cytoplasm. The catalysed reaction is 1-(5-phospho-beta-D-ribosyl)-ATP + diphosphate = 5-phospho-alpha-D-ribose 1-diphosphate + ATP. The protein operates within amino-acid biosynthesis; L-histidine biosynthesis; L-histidine from 5-phospho-alpha-D-ribose 1-diphosphate: step 1/9. Feedback inhibited by histidine. Functionally, catalyzes the condensation of ATP and 5-phosphoribose 1-diphosphate to form N'-(5'-phosphoribosyl)-ATP (PR-ATP). Has a crucial role in the pathway because the rate of histidine biosynthesis seems to be controlled primarily by regulation of HisG enzymatic activity. The protein is ATP phosphoribosyltransferase of Shewanella woodyi (strain ATCC 51908 / MS32).